Reading from the N-terminus, the 391-residue chain is Shewanella-like protein phosphatase 2 (391 aa).

Residues Asp61, His63, Asp97, and Asn132 each coordinate Mn(2+). His133 serves as the catalytic Proton donor. The Mn(2+) site is built by His232 and His295.

The protein belongs to the metallophosphoesterase superfamily. SLP family. Requires Mn(2+) as cofactor. Expressed in roots and siliques (at protein level).

It localises to the cytoplasm. Its subcellular location is the cytosol. Functionally, shows phosphatase activity, hydrolyzing the artificial substrate para-nitrophenylphosphate (pNPP) in vitro. In Arabidopsis thaliana (Mouse-ear cress), this protein is Shewanella-like protein phosphatase 2.